The chain runs to 91 residues: Sec-independent protein translocase protein TatA (91 aa).

The chain crosses the membrane as a helical span at residues 1-21 (MGSMSVWHWVIVAVVVMLLFG). A disordered region spans residues 42 to 91 (GMADDETQPTNTTSVPPVGPNDPVRTLPHQGAPGTAPQQTHVPAGDHKAV).

Belongs to the TatA/E family. In terms of assembly, the Tat system comprises two distinct complexes: a TatABC complex, containing multiple copies of TatA, TatB and TatC subunits, and a separate TatA complex, containing only TatA subunits. Substrates initially bind to the TatABC complex, which probably triggers association of the separate TatA complex to form the active translocon.

The protein localises to the cell inner membrane. Part of the twin-arginine translocation (Tat) system that transports large folded proteins containing a characteristic twin-arginine motif in their signal peptide across membranes. TatA could form the protein-conducting channel of the Tat system. This Methylorubrum populi (strain ATCC BAA-705 / NCIMB 13946 / BJ001) (Methylobacterium populi) protein is Sec-independent protein translocase protein TatA.